We begin with the raw amino-acid sequence, 635 residues long: Probable potassium transport system protein Kup (635 aa).

12 helical membrane-spanning segments follow: residues 20 to 40, 62 to 82, 111 to 131, 149 to 169, 180 to 200, 223 to 243, 259 to 279, 292 to 312, 349 to 369, 377 to 397, 408 to 428, and 429 to 449; these read MALV…SPLY, VLSL…VTII, AYVV…DGVI, PSLH…VFMV, VFGP…IWNI, GWHG…GEAL, WYFF…ALVL, AVPS…AVIA, IYVP…VLIF, VAYG…LALV, WVLP…IANG, and AKLL…FTLM.

This sequence belongs to the HAK/KUP transporter (TC 2.A.72) family.

It is found in the cell inner membrane. It carries out the reaction K(+)(in) + H(+)(in) = K(+)(out) + H(+)(out). Transport of potassium into the cell. Likely operates as a K(+):H(+) symporter. This Xanthomonas campestris pv. campestris (strain 8004) protein is Probable potassium transport system protein Kup.